The chain runs to 273 residues: NH(3)-dependent NAD(+) synthetase (273 aa).

34–41 is a binding site for ATP; the sequence is GLSGGIDS. Aspartate 40 serves as a coordination point for Mg(2+). Arginine 116 provides a ligand contact to deamido-NAD(+). Position 136 (threonine 136) interacts with ATP. Mg(2+) is bound at residue glutamate 141. ATP-binding residues include lysine 165 and serine 187.

It belongs to the NAD synthetase family. In terms of assembly, homodimer.

It catalyses the reaction deamido-NAD(+) + NH4(+) + ATP = AMP + diphosphate + NAD(+) + H(+). Its pathway is cofactor biosynthesis; NAD(+) biosynthesis; NAD(+) from deamido-NAD(+) (ammonia route): step 1/1. Its function is as follows. Catalyzes the ATP-dependent amidation of deamido-NAD to form NAD. Uses ammonia as a nitrogen source. The protein is NH(3)-dependent NAD(+) synthetase of Trichlorobacter lovleyi (strain ATCC BAA-1151 / DSM 17278 / SZ) (Geobacter lovleyi).